We begin with the raw amino-acid sequence, 340 residues long: Protein-arginine kinase (340 aa).

The Phosphagen kinase C-terminal domain maps to 21-242 (VVLSSRIRLA…EQIIMQERVA (222 aa)). ATP is bound by residues 24 to 28 (SSRIR), H79, R113, 164 to 168 (RASVM), and 195 to 200 (RGIYGE).

Belongs to the ATP:guanido phosphotransferase family.

It carries out the reaction L-arginyl-[protein] + ATP = N(omega)-phospho-L-arginyl-[protein] + ADP + H(+). Functionally, catalyzes the specific phosphorylation of arginine residues in proteins. The chain is Protein-arginine kinase from Listeria innocua serovar 6a (strain ATCC BAA-680 / CLIP 11262).